A 944-amino-acid polypeptide reads, in one-letter code: Neutral alpha-glucosidase AB (944 aa).

The signal sequence occupies residues 1–28 (MAAVAAVAARRRRSWASLVLAFLGVCLG). A disulfide bridge connects residues cysteine 41 and cysteine 47. A Phosphoserine modification is found at serine 52. Asparagine 97 carries an N-linked (GlcNAc...) asparagine glycan. Residues 181–238 (QRAPRVSQGSKDPAEGDGAQPEETPRDGDKPEETQGKAEKDEPGAWEETFKTHSDSKP) form a disordered region. The span at 203–236 (ETPRDGDKPEETQGKAEKDEPGAWEETFKTHSDS) shows a compositional bias: basic and acidic residues. Substrate is bound by residues aspartate 283 and aspartate 429. The Nucleophile role is filled by aspartate 542. Arginine 602 contacts substrate. The active-site Proton donor is the aspartate 618. Cysteine 633 and cysteine 644 are oxidised to a cystine. Position 676 (histidine 676) interacts with substrate.

Belongs to the glycosyl hydrolase 31 family. Heterodimer of a catalytic alpha subunit (GANAB) and a beta subunit (PRKCSH). Binds glycosylated PTPRC. Detected in placenta. Isoform 1 and isoform 2 are expressed in the kidney and liver.

The protein resides in the endoplasmic reticulum. It is found in the golgi apparatus. The protein localises to the melanosome. The catalysed reaction is N(4)-(alpha-D-Glc-(1-&gt;3)-alpha-D-Man-(1-&gt;2)-alpha-D-Man-(1-&gt;2)-alpha-D-Man-(1-&gt;3)-[alpha-D-Man-(1-&gt;2)-alpha-D-Man-(1-&gt;3)-[alpha-D-Man-(1-&gt;2)-alpha-D-Man-(1-&gt;6)]-alpha-D-Man-(1-&gt;6)]-beta-D-Man-(1-&gt;4)-beta-D-GlcNAc-(1-&gt;4)-beta-D-GlcNAc)-L-asparaginyl-[protein] + H2O = N(4)-(alpha-D-Man-(1-&gt;2)-alpha-D-Man-(1-&gt;2)-alpha-D-Man-(1-&gt;3)-[alpha-D-Man-(1-&gt;2)-alpha-D-Man-(1-&gt;3)-[alpha-D-Man-(1-&gt;2)-alpha-D-Man-(1-&gt;6)]-alpha-D-Man-(1-&gt;6)]-beta-D-Man-(1-&gt;4)-beta-D-GlcNAc-(1-&gt;4)-beta-D-GlcNAc)-L-asparaginyl-[protein] (N-glucan mannose isomer 9A1,2,3B1,2,3) + beta-D-glucose. It catalyses the reaction N(4)-(alpha-D-Glc-(1-&gt;3)-alpha-D-Glc-(1-&gt;3)-alpha-D-Man-(1-&gt;2)-alpha-D-Man-(1-&gt;2)-alpha-D-Man-(1-&gt;3)-[alpha-D-Man-(1-&gt;2)-alpha-D-Man-(1-&gt;3)-[alpha-D-Man-(1-&gt;2)-alpha-D-Man-(1-&gt;6)]-alpha-D-Man-(1-&gt;6)]-beta-D-Man-(1-&gt;4)-beta-D-GlcNAc-(1-&gt;4)-beta-D-GlcNAc)-L-asparaginyl-[protein] + H2O = N(4)-(alpha-D-Glc-(1-&gt;3)-alpha-D-Man-(1-&gt;2)-alpha-D-Man-(1-&gt;2)-alpha-D-Man-(1-&gt;3)-[alpha-D-Man-(1-&gt;2)-alpha-D-Man-(1-&gt;3)-[alpha-D-Man-(1-&gt;2)-alpha-D-Man-(1-&gt;6)]-alpha-D-Man-(1-&gt;6)]-beta-D-Man-(1-&gt;4)-beta-D-GlcNAc-(1-&gt;4)-beta-D-GlcNAc)-L-asparaginyl-[protein] + beta-D-glucose. The protein operates within glycan metabolism; N-glycan metabolism. With respect to regulation, inhibited by deoxynojirimycin. Its function is as follows. Catalytic subunit of glucosidase II that cleaves sequentially the 2 innermost alpha-1,3-linked glucose residues from the Glc(2)Man(9)GlcNAc(2) oligosaccharide precursor of immature glycoproteins. Required for PKD1/Polycystin-1 and PKD2/Polycystin-2 maturation and localization to the cell surface and cilia. This is Neutral alpha-glucosidase AB from Homo sapiens (Human).